A 620-amino-acid polypeptide reads, in one-letter code: MALLQIAEPGQSAAPHQHRLAVGIDLGTTNSLVAAVRSGETATLPDEDGQHSLPSIVRYTQDTVEVGALAALSSAQDPKNTIVSVKRFMGRSLTDIQTGEQSFPYEFAESENGLPLFVTPQGLVNPVQVSAEILRPLIARAEKTLGGELQGVVITVPAYFDDAQRQGTKDAAALLGVKVLRLLNEPTAAAIAYGLDSKQEGVIAIFDLGGGTFDISVLRLNRGVFEVLATGGDSALGGDDFDHLLQEHMQQVWLLGDIDVQLRRQLLIEARRVKEALTDANETEARIILADGSELKQVVTKRDFDSLISPLVKKTIASCRRTLRDAGVTAEEVLETVMVGGSTRVPLVREQVEAFFGKPPLTSIDPDRVVAIGAAIQADILVGNKPESDLLLLDVIPLSLGIETMGGLVEKVVSRNTTIPVARAQEFTTFKDGQTAMAFHVVQGERELVADCRSLARFTLKGIPPLAAGAAHIRVTFQVDADGLLSVTAMEKSTGVQSSIQVKPSFGLSDTEIATMLKDSMKYAKDDISRRMLAEQQVEAARVLESLHAALAKDGDLLNDDERGQIDATMANVAQLATGDDAEAIKQAIERLDEQTQDFAARRMDNSIRVAFKGQSIDNI.

Belongs to the heat shock protein 70 family.

Its function is as follows. Chaperone involved in the maturation of iron-sulfur cluster-containing proteins. Has a low intrinsic ATPase activity which is markedly stimulated by HscB. This Shewanella putrefaciens (strain CN-32 / ATCC BAA-453) protein is Chaperone protein HscA homolog.